The following is a 227-amino-acid chain: 2-C-methyl-D-erythritol 4-phosphate cytidylyltransferase (227 aa).

Belongs to the IspD/TarI cytidylyltransferase family. IspD subfamily.

The enzyme catalyses 2-C-methyl-D-erythritol 4-phosphate + CTP + H(+) = 4-CDP-2-C-methyl-D-erythritol + diphosphate. Its pathway is isoprenoid biosynthesis; isopentenyl diphosphate biosynthesis via DXP pathway; isopentenyl diphosphate from 1-deoxy-D-xylulose 5-phosphate: step 2/6. Catalyzes the formation of 4-diphosphocytidyl-2-C-methyl-D-erythritol from CTP and 2-C-methyl-D-erythritol 4-phosphate (MEP). The sequence is that of 2-C-methyl-D-erythritol 4-phosphate cytidylyltransferase from Deinococcus geothermalis (strain DSM 11300 / CIP 105573 / AG-3a).